The chain runs to 212 residues: MKTLAIDEEQLFLSKTIFEEEVYGEGFSIIAGVDEVGRGPLAGPVVAGACILPRGKIFAGVNDSKKLTPKERGKIRDILLNDPDVCYGIGVVSVERIDEINILEATKEAMAKAIANLSVHPDFLLIDGLHLPHKIPCKKIIKGDSKSASIAAASIIAKEYRDDLMRELHQRYPNYGFDKHKGYGTAAHLAALRAFGPCDCHRKSFAPIRQVV.

The RNase H type-2 domain occupies S28–V212. A divalent metal cation contacts are provided by D34, E35, and D127.

The protein belongs to the RNase HII family. It depends on Mn(2+) as a cofactor. The cofactor is Mg(2+).

Its subcellular location is the cytoplasm. It carries out the reaction Endonucleolytic cleavage to 5'-phosphomonoester.. Endonuclease that specifically degrades the RNA of RNA-DNA hybrids. In Chlamydia caviae (strain ATCC VR-813 / DSM 19441 / 03DC25 / GPIC) (Chlamydophila caviae), this protein is Ribonuclease HII.